The chain runs to 101 residues: Phosphoribosyl-AMP cyclohydrolase (101 aa).

Residue D71 coordinates Mg(2+). C72 is a Zn(2+) binding site. Mg(2+)-binding residues include D73 and D75. C88 and C95 together coordinate Zn(2+).

The protein belongs to the PRA-CH family. As to quaternary structure, homodimer. It depends on Mg(2+) as a cofactor. The cofactor is Zn(2+).

Its subcellular location is the cytoplasm. It carries out the reaction 1-(5-phospho-beta-D-ribosyl)-5'-AMP + H2O = 1-(5-phospho-beta-D-ribosyl)-5-[(5-phospho-beta-D-ribosylamino)methylideneamino]imidazole-4-carboxamide. It participates in amino-acid biosynthesis; L-histidine biosynthesis; L-histidine from 5-phospho-alpha-D-ribose 1-diphosphate: step 3/9. Its function is as follows. Catalyzes the hydrolysis of the adenine ring of phosphoribosyl-AMP. The chain is Phosphoribosyl-AMP cyclohydrolase from Bacillus cereus (strain ZK / E33L).